A 332-amino-acid chain; its full sequence is MKVAVLGAGAWGTALAAHLAVRHDTLLWARDAALVAELAVRRENARYLGGVALPPGLRYEADLATALSHAQADDALCVIAAPVAGLRALCRAMRDARRVPAHFVWVCKGFEADTRRLPHQMVAEELPDHASYGVLSGPSFAREVAQGLPVALTVASASAACRERTLAAFHHGAMRIYTGDDVVGVEVGGAVKNVLAIATGIADGLGLGLNARAALVTRGLAEMSRLGVALGGRAETFTGLTGLGDLILTATGDLSRNRSVGLQLAAGRSLDDILAALGHVAEGVRCARAVLSIARERGVDMPITEAVCAVLFDGVAPRDAVSGLLRRDAKAE.

The NADPH site is built by Trp11, Arg30, and Lys108. Residues Lys108, Gly137, and Ser139 each coordinate sn-glycerol 3-phosphate. Ala141 contacts NADPH. The sn-glycerol 3-phosphate site is built by Lys192, Asp245, Ser255, Arg256, and Asn257. The active-site Proton acceptor is Lys192. Residue Arg256 participates in NADPH binding. The NADPH site is built by Val280 and Glu282.

This sequence belongs to the NAD-dependent glycerol-3-phosphate dehydrogenase family.

Its subcellular location is the cytoplasm. The catalysed reaction is sn-glycerol 3-phosphate + NAD(+) = dihydroxyacetone phosphate + NADH + H(+). It catalyses the reaction sn-glycerol 3-phosphate + NADP(+) = dihydroxyacetone phosphate + NADPH + H(+). The protein operates within membrane lipid metabolism; glycerophospholipid metabolism. In terms of biological role, catalyzes the reduction of the glycolytic intermediate dihydroxyacetone phosphate (DHAP) to sn-glycerol 3-phosphate (G3P), the key precursor for phospholipid synthesis. The sequence is that of Glycerol-3-phosphate dehydrogenase [NAD(P)+] from Burkholderia pseudomallei (strain 1710b).